Here is a 308-residue protein sequence, read N- to C-terminus: Olfactory receptor 6F1 (308 aa).

The Extracellular segment spans residues 1-25 (MDTGNKTLPQDFLLLGFPGSQTLQL). Asn-5 carries an N-linked (GlcNAc...) asparagine glycan. Residues 26-46 (SLFMLFLVMYILTVSGNVAIL) traverse the membrane as a helical segment. Topologically, residues 47–54 (MLVSTSHQ) are cytoplasmic. A helical membrane pass occupies residues 55–75 (LHTPMYFFLSNLSFLEIWYTT). The Extracellular segment spans residues 76 to 99 (AAVPKALAILLGRSQTISFTSCLL). A disulfide bridge links Cys-97 with Cys-189. A helical membrane pass occupies residues 100 to 120 (QMYFVFSLGCTEYFLLAAMAY). The Cytoplasmic segment spans residues 121–139 (DRCLAICYPLHYGAIMSSL). Residues 140-160 (LSAQLALGSWVCGFVAIAVPT) traverse the membrane as a helical segment. Residues 161 to 197 (ALISGLSFCGPRAINHFFCDIAPWIALACTNTQAVEL) are Extracellular-facing. A helical membrane pass occupies residues 198-217 (VAFVIAVVVILSSCLITFVS). Topologically, residues 218 to 237 (YVYIISTILRIPSASGRSKA) are cytoplasmic. The helical transmembrane segment at 238–258 (FSTCSSHLTVVLIWYGSTVFL) threads the bilayer. Residues 259 to 271 (HVRTSIKDALDLI) are Extracellular-facing. A helical membrane pass occupies residues 272–292 (KAVHVLNTVVTPVLNPFIYTL). Residues 293–308 (RNKEVRETLLKKWKGK) are Cytoplasmic-facing.

It belongs to the G-protein coupled receptor 1 family.

It is found in the cell membrane. Odorant receptor. The polypeptide is Olfactory receptor 6F1 (OR6F1) (Homo sapiens (Human)).